We begin with the raw amino-acid sequence, 254 residues long: Glycerol operon regulatory protein (254 aa).

Residues 5–67 enclose the HTH iclR-type domain; the sequence is IQSLERAAAM…DASGRYQLGA (63 aa). Residues 27-46 constitute a DNA-binding region (H-T-H motif); sequence LSDIASSLGLAKGTAHGILR. Residues 82-251 enclose the IclR-ED domain; it reads LRARALVWTD…ARAVSRDLGA (170 aa).

In terms of biological role, may be an activator protein for the gylABX operon. This Streptomyces coelicolor (strain ATCC BAA-471 / A3(2) / M145) protein is Glycerol operon regulatory protein (gylR).